The chain runs to 128 residues: Ribonuclease pancreatic (128 aa).

Residues 1 to 25 (KESSAKKFQRQHIDSSGSPSTNPNY) are disordered. Substrate-binding residues include lysine 7 and arginine 10. Histidine 12 acts as the Proton acceptor in catalysis. Positions 14-25 (DSSGSPSTNPNY) are enriched in polar residues. 4 disulfides stabilise this stretch: cysteine 26–cysteine 84, cysteine 40–cysteine 95, cysteine 58–cysteine 110, and cysteine 65–cysteine 72. Asparagine 34 carries N-linked (GlcNAc...) asparagine glycosylation. Residues 41 to 45 (KPVNT), lysine 66, and arginine 85 contribute to the substrate site. Catalysis depends on histidine 119, which acts as the Proton donor.

The protein belongs to the pancreatic ribonuclease family. Monomer. Interacts with and forms tight 1:1 complexes with RNH1. Dimerization of two such complexes may occur. Interaction with RNH1 inhibits this protein. As to expression, pancreas.

Its subcellular location is the secreted. The catalysed reaction is an [RNA] containing cytidine + H2O = an [RNA]-3'-cytidine-3'-phosphate + a 5'-hydroxy-ribonucleotide-3'-[RNA].. The enzyme catalyses an [RNA] containing uridine + H2O = an [RNA]-3'-uridine-3'-phosphate + a 5'-hydroxy-ribonucleotide-3'-[RNA].. In terms of biological role, endonuclease that catalyzes the cleavage of RNA on the 3' side of pyrimidine nucleotides. Acts on single-stranded and double-stranded RNA. This is Ribonuclease pancreatic (RNASE1) from Proechimys guairae (Guaira spiny rat).